The following is a 246-amino-acid chain: 1-(5-phosphoribosyl)-5-[(5-phosphoribosylamino)methylideneamino] imidazole-4-carboxamide isomerase (246 aa).

The Proton acceptor role is filled by aspartate 8. The active-site Proton donor is the aspartate 131.

This sequence belongs to the HisA/HisF family.

It is found in the cytoplasm. The enzyme catalyses 1-(5-phospho-beta-D-ribosyl)-5-[(5-phospho-beta-D-ribosylamino)methylideneamino]imidazole-4-carboxamide = 5-[(5-phospho-1-deoxy-D-ribulos-1-ylimino)methylamino]-1-(5-phospho-beta-D-ribosyl)imidazole-4-carboxamide. Its pathway is amino-acid biosynthesis; L-histidine biosynthesis; L-histidine from 5-phospho-alpha-D-ribose 1-diphosphate: step 4/9. This is 1-(5-phosphoribosyl)-5-[(5-phosphoribosylamino)methylideneamino] imidazole-4-carboxamide isomerase from Lactococcus lactis subsp. cremoris (strain SK11).